Reading from the N-terminus, the 430-residue chain is Aspartate aminotransferase, mitochondrial (430 aa).

The N-terminal 29 residues, 1–29 (MALLHSGRVLSGMAAAFHPGLAAAASARA), are a transit peptide targeting the mitochondrion. Threonine 48 is subject to Phosphothreonine. Lysine 59 is modified (N6-acetyllysine). Glycine 65 lines the substrate pocket. An N6-acetyllysine; alternate modification is found at lysine 73. The residue at position 73 (lysine 73) is an N6-succinyllysine; alternate. Lysine 82 bears the N6-acetyllysine mark. Lysine 90 is modified (N6-acetyllysine; alternate). Position 90 is an N6-succinyllysine; alternate (lysine 90). A 3'-nitrotyrosine; alternate modification is found at tyrosine 96. Phosphotyrosine; alternate is present on tyrosine 96. Lysine 107 and lysine 122 each carry N6-acetyllysine; alternate. An N6-succinyllysine; alternate mark is found at lysine 107 and lysine 122. Position 143 is a phosphoserine (serine 143). An N6-acetyllysine; alternate modification is found at lysine 159. Lysine 159 bears the N6-succinyllysine; alternate mark. Position 162 (tryptophan 162) interacts with substrate. Lysine 185 is modified (N6-acetyllysine; alternate). Lysine 185 carries the N6-succinyllysine; alternate modification. Residue asparagine 215 coordinates substrate. Position 227 is an N6-succinyllysine (lysine 227). Lysine 234 is modified (N6-acetyllysine). 2 positions are modified to N6-acetyllysine; alternate: lysine 279 and lysine 296. Residue lysine 279 is modified to N6-(pyridoxal phosphate)lysine; alternate. At lysine 296 the chain carries N6-succinyllysine; alternate. Lysine 302 is subject to N6-acetyllysine. At lysine 309 the chain carries N6-acetyllysine; alternate. Lysine 309 carries the N6-succinyllysine; alternate modification. Residue arginine 313 is modified to Asymmetric dimethylarginine. Position 338 is an N6-acetyllysine; alternate (lysine 338). The residue at position 338 (lysine 338) is an N6-succinyllysine; alternate. Lysine 345 is modified (N6-acetyllysine). Lysine 363 is modified (N6-acetyllysine; alternate). Lysine 363 is subject to N6-succinyllysine; alternate. N6-acetyllysine is present on residues lysine 364 and lysine 387. 2 positions are modified to N6-acetyllysine; alternate: lysine 396 and lysine 404. Lysine 396 and lysine 404 each carry N6-succinyllysine; alternate. Arginine 407 serves as a coordination point for substrate.

Belongs to the class-I pyridoxal-phosphate-dependent aminotransferase family. Homodimer. Requires pyridoxal 5'-phosphate as cofactor. Expressed in all tissues tested: liver, pancreas, kidney, heart, spleen, arterioles, and lymphocytes.

The protein resides in the mitochondrion matrix. The protein localises to the cell membrane. It carries out the reaction L-aspartate + 2-oxoglutarate = oxaloacetate + L-glutamate. The catalysed reaction is L-kynurenine + 2-oxoglutarate = kynurenate + L-glutamate + H2O. Its function is as follows. Catalyzes the irreversible transamination of the L-tryptophan metabolite L-kynurenine to form kynurenic acid (KA). As a member of the malate-aspartate shuttle, it has a key role in the intracellular NAD(H) redox balance. Is important for metabolite exchange between mitochondria and cytosol, and for amino acid metabolism. Facilitates cellular uptake of long-chain free fatty acids. The polypeptide is Aspartate aminotransferase, mitochondrial (Got2) (Rattus norvegicus (Rat)).